A 180-amino-acid polypeptide reads, in one-letter code: Acireductone dioxygenase (180 aa).

Histidine 97, histidine 99, glutamate 103, and histidine 141 together coordinate Fe(2+). Ni(2+)-binding residues include histidine 97, histidine 99, glutamate 103, and histidine 141.

It belongs to the acireductone dioxygenase (ARD) family. Monomer. Fe(2+) serves as cofactor. Ni(2+) is required as a cofactor.

It catalyses the reaction 1,2-dihydroxy-5-(methylsulfanyl)pent-1-en-3-one + O2 = 3-(methylsulfanyl)propanoate + CO + formate + 2 H(+). The catalysed reaction is 1,2-dihydroxy-5-(methylsulfanyl)pent-1-en-3-one + O2 = 4-methylsulfanyl-2-oxobutanoate + formate + 2 H(+). The protein operates within amino-acid biosynthesis; L-methionine biosynthesis via salvage pathway; L-methionine from S-methyl-5-thio-alpha-D-ribose 1-phosphate: step 5/6. Catalyzes 2 different reactions between oxygen and the acireductone 1,2-dihydroxy-3-keto-5-methylthiopentene (DHK-MTPene) depending upon the metal bound in the active site. Fe-containing acireductone dioxygenase (Fe-ARD) produces formate and 2-keto-4-methylthiobutyrate (KMTB), the alpha-ketoacid precursor of methionine in the methionine recycle pathway. Ni-containing acireductone dioxygenase (Ni-ARD) produces methylthiopropionate, carbon monoxide and formate, and does not lie on the methionine recycle pathway. The polypeptide is Acireductone dioxygenase (Klebsiella pneumoniae subsp. pneumoniae (strain ATCC 700721 / MGH 78578)).